The sequence spans 37 residues: Large ribosomal subunit protein bL36 (37 aa).

It belongs to the bacterial ribosomal protein bL36 family.

The polypeptide is Large ribosomal subunit protein bL36 (Clostridium perfringens (strain ATCC 13124 / DSM 756 / JCM 1290 / NCIMB 6125 / NCTC 8237 / Type A)).